Reading from the N-terminus, the 290-residue chain is Glutaredoxin domain-containing cysteine-rich protein 1 (290 aa).

A Glutaredoxin domain is found at 127–234 (LQQPSTDLEF…DILTKIERVQ (108 aa)).

The protein belongs to the GRXCR1 family. As to expression, expressed at low levels in adult lung, brain and duodenum with moderate levels in testis. Highly expressed in fetal cochlea.

It is found in the cell projection. Its subcellular location is the stereocilium. It localises to the microvillus. The protein localises to the kinocilium. Functionally, may play a role in actin filament architecture in developing stereocilia of sensory cells. The chain is Glutaredoxin domain-containing cysteine-rich protein 1 (GRXCR1) from Homo sapiens (Human).